Consider the following 560-residue polypeptide: Protein DA1-related 7 (560 aa).

UIM domains are found at residues 43–62, 92–111, and 155–174; these read SEAD…QETS, EEDQ…KGKS, and NEDA…KGQI. One can recognise an LIM zinc-binding domain in the interval 199–269; that stretch reads SICDGCKSAI…HVCKKKFPGR (71 aa).

As to quaternary structure, interacts with ubiquitin.

In terms of biological role, ubiquitin receptor that probably regulates developmental process. This is Protein DA1-related 7 (DAR7) from Arabidopsis thaliana (Mouse-ear cress).